The sequence spans 492 residues: Aspartyl/glutamyl-tRNA(Asn/Gln) amidotransferase subunit B (492 aa).

It belongs to the GatB/GatE family. GatB subfamily. Heterotrimer of A, B and C subunits.

The catalysed reaction is L-glutamyl-tRNA(Gln) + L-glutamine + ATP + H2O = L-glutaminyl-tRNA(Gln) + L-glutamate + ADP + phosphate + H(+). The enzyme catalyses L-aspartyl-tRNA(Asn) + L-glutamine + ATP + H2O = L-asparaginyl-tRNA(Asn) + L-glutamate + ADP + phosphate + 2 H(+). Functionally, allows the formation of correctly charged Asn-tRNA(Asn) or Gln-tRNA(Gln) through the transamidation of misacylated Asp-tRNA(Asn) or Glu-tRNA(Gln) in organisms which lack either or both of asparaginyl-tRNA or glutaminyl-tRNA synthetases. The reaction takes place in the presence of glutamine and ATP through an activated phospho-Asp-tRNA(Asn) or phospho-Glu-tRNA(Gln). This chain is Aspartyl/glutamyl-tRNA(Asn/Gln) amidotransferase subunit B, found in Pelagibacter ubique (strain HTCC1062).